Reading from the N-terminus, the 161-residue chain is Phosphopantetheine adenylyltransferase (161 aa).

Serine 8 provides a ligand contact to substrate. ATP-binding positions include 8 to 9 and histidine 16; that span reads SF. 3 residues coordinate substrate: lysine 40, threonine 72, and arginine 86. ATP is bound by residues 87–89, glutamate 97, and 122–128; these read GLR and HSFLSSS.

Belongs to the bacterial CoaD family. Homohexamer. Mg(2+) is required as a cofactor.

The protein resides in the cytoplasm. It catalyses the reaction (R)-4'-phosphopantetheine + ATP + H(+) = 3'-dephospho-CoA + diphosphate. Its pathway is cofactor biosynthesis; coenzyme A biosynthesis; CoA from (R)-pantothenate: step 4/5. Reversibly transfers an adenylyl group from ATP to 4'-phosphopantetheine, yielding dephospho-CoA (dPCoA) and pyrophosphate. The protein is Phosphopantetheine adenylyltransferase of Gloeobacter violaceus (strain ATCC 29082 / PCC 7421).